The primary structure comprises 267 residues: Pyridoxine/pyridoxamine 5'-phosphate oxidase (267 aa).

Substrate contacts are provided by residues arginine 20–tyrosine 23 and lysine 80. Residues arginine 75–lysine 80, tyrosine 90–threonine 91, arginine 96, lysine 97, and glutamine 119 each bind FMN. The substrate site is built by tyrosine 137, arginine 141, and serine 145. Residues glutamine 154–serine 155 and tryptophan 200 each bind FMN. Residue arginine 206 to histidine 208 coordinates substrate. Arginine 210 lines the FMN pocket.

Belongs to the pyridoxamine 5'-phosphate oxidase family. Homodimer. It depends on FMN as a cofactor.

The catalysed reaction is pyridoxamine 5'-phosphate + O2 + H2O = pyridoxal 5'-phosphate + H2O2 + NH4(+). It carries out the reaction pyridoxine 5'-phosphate + O2 = pyridoxal 5'-phosphate + H2O2. Its pathway is cofactor metabolism; pyridoxal 5'-phosphate salvage; pyridoxal 5'-phosphate from pyridoxamine 5'-phosphate: step 1/1. It participates in cofactor metabolism; pyridoxal 5'-phosphate salvage; pyridoxal 5'-phosphate from pyridoxine 5'-phosphate: step 1/1. Its function is as follows. Catalyzes the oxidation of either pyridoxine 5'-phosphate (PNP) or pyridoxamine 5'-phosphate (PMP) into pyridoxal 5'-phosphate (PLP). In Frankia casuarinae (strain DSM 45818 / CECT 9043 / HFP020203 / CcI3), this protein is Pyridoxine/pyridoxamine 5'-phosphate oxidase.